The following is a 979-amino-acid chain: Pimaradiene synthase pbcA (979 aa).

The VYDTAW motif signature appears at 34 to 39 (VYDTAW). The DXDD B-type cyclization motif signature appears at 328–331 (DADD). Aspartate 665, glutamate 669, asparagine 865, aspartate 866, serine 869, and aspartate 873 together coordinate Mg(2+). Positions 665–669 (DEFME) match the DEXXE A-type cyclization motif motif.

The protein belongs to the terpene synthase family. It depends on Mg(2+) as a cofactor.

It catalyses the reaction (2E,6E,10E)-geranylgeranyl diphosphate = ent-copalyl diphosphate. It carries out the reaction ent-copalyl diphosphate = ent-pimara-8(14),15-diene + diphosphate. It functions in the pathway secondary metabolite biosynthesis; terpenoid biosynthesis. Functionally, bifunctional terpene synthase; part of the gene cluster that mediates the biosynthesis of the diterpene ent-pimara-8(14),15-diene (PD). Within the cluster, the HMG-CoA reductase AN1593 functions in the mevalonate pathway, which produces isoprenoid precursors. The geranylgeranyl pyrophosphate (GGPP) synthase AN1592 is needed in the formation of GGPP, the precursor for diterpenes. Lastly, the pimaradiene synthase pbcA performs the 2 cyclization steps that convert GGPP to ent-pimara-8(14),15-diene with ent-copalyl diphosphate as an intermediate. The putative roles of the remaining cluster enzymes in ent-pimara-8(14),15-diene biosynthesis is unclear. The cytochrome P450 monooxygenase AN1598, the glutathione S-transferase AN1595, the oxidoreductases AN1596 and AN1597 probably function as decorative enzymes. It is possible that in biological conditions the compound is oxidized to ent-pimara-8(14),15-dien-19-oic acid, which is a bioactive diterpene compound predominant in many plant extracts. This chain is Pimaradiene synthase pbcA, found in Emericella nidulans (strain FGSC A4 / ATCC 38163 / CBS 112.46 / NRRL 194 / M139) (Aspergillus nidulans).